The primary structure comprises 500 residues: L-arabinose isomerase (500 aa).

Mn(2+) contacts are provided by Glu306, Glu333, His350, and His450.

It belongs to the arabinose isomerase family. Homohexamer. It depends on Mn(2+) as a cofactor.

It catalyses the reaction beta-L-arabinopyranose = L-ribulose. Its pathway is carbohydrate degradation; L-arabinose degradation via L-ribulose; D-xylulose 5-phosphate from L-arabinose (bacterial route): step 1/3. Catalyzes the conversion of L-arabinose to L-ribulose. In Salmonella newport (strain SL254), this protein is L-arabinose isomerase.